A 380-amino-acid chain; its full sequence is Putative 12-oxophytodienoate reductase 4 (380 aa).

FMN-binding positions include 36 to 38 (PLT), alanine 69, and glutamine 111. Residue 183 to 186 (HGAH) participates in substrate binding. Tyrosine 188 acts as the Proton donor in catalysis. Arginine 235 is an FMN binding site. Arginine 276 contacts substrate. FMN contacts are provided by residues glycine 306 and 327–328 (GR).

Belongs to the NADH:flavin oxidoreductase/NADH oxidase family. FMN is required as a cofactor.

Functionally, putative oxophytodienoate reductase that may be involved in the biosynthesis or metabolism of oxylipin signaling molecules. The chain is Putative 12-oxophytodienoate reductase 4 (OPR4) from Oryza sativa subsp. japonica (Rice).